Here is a 446-residue protein sequence, read N- to C-terminus: Methylenetetrahydrofolate--tRNA-(uracil-5-)-methyltransferase TrmFO (446 aa).

Gly-9–Gly-14 provides a ligand contact to FAD.

It belongs to the MnmG family. TrmFO subfamily. It depends on FAD as a cofactor.

The protein resides in the cytoplasm. It catalyses the reaction uridine(54) in tRNA + (6R)-5,10-methylene-5,6,7,8-tetrahydrofolate + NADH + H(+) = 5-methyluridine(54) in tRNA + (6S)-5,6,7,8-tetrahydrofolate + NAD(+). The catalysed reaction is uridine(54) in tRNA + (6R)-5,10-methylene-5,6,7,8-tetrahydrofolate + NADPH + H(+) = 5-methyluridine(54) in tRNA + (6S)-5,6,7,8-tetrahydrofolate + NADP(+). Catalyzes the folate-dependent formation of 5-methyl-uridine at position 54 (M-5-U54) in all tRNAs. This is Methylenetetrahydrofolate--tRNA-(uracil-5-)-methyltransferase TrmFO from Ruegeria sp. (strain TM1040) (Silicibacter sp.).